The following is a 593-amino-acid chain: MKSMASPSSQIWVILGLGLAGIYVLTRKLTQAVKEDFGAFLLKLKLLPPPPPAPPKAPHPLSSLNFAISDIFDIEGHVSTFGHPEWARTHEPASSTASAVSALVESGATCIGTTVVDELAYGISGENKHFGTPTNPAVPNRVPGGSSSGAAVAVAANFVDFSLGVDTSGGVRVPAGFCGILGFRPSHGAVSHVGIIPVSTSLDTVGWFAKDPDVLRRVGHILLQAPFVMQRNPRQIIIADDCFQHLNVPLDRTSQVVIKATEKLFGKQVLKHINFEDYISSKVSSLKACSIQKSNGVLKSSSLKLLANVMQSLQRHEFEHTHSEWMSIVKPDLHPAVSAQLHEKFEVSELEIENSKSVRSELRVAVNSLLKDEGVLVIPTVADPPPKLGGKEFLSHDYQSRALSLLSIASISGCCQVTVPLGFFDKNPVSVSLIARHGGDRFLLDTLKTMYTVLQEQADIAAPSKSSKSVVSKEQSAEISKEKGNQAYKDKQWQKAIGFYTEAIKLCGNNATYYSNRAQAYLELGSYLQAEEDCTTAISFDKKNVKAYFRRGTAREMLGYYKEAIDDFKYALVLEPTNKRAASSAERLRKLFQ.

At 1–4 the chain is on the chloroplast intermembrane side; sequence MKSM. The chain crosses the membrane as a helical span at residues 5–25; that stretch reads ASPSSQIWVILGLGLAGIYVL. Residues 26–144 are Cytoplasmic-facing; it reads TRKLTQAVKE…NPAVPNRVPG (119 aa). The helical transmembrane segment at 145-165 threads the bilayer; sequence GSSSGAAVAVAANFVDFSLGV. The Chloroplast intermembrane segment spans residues 166–403; sequence DTSGGVRVPA…LSHDYQSRAL (238 aa). Residues 404–424 traverse the membrane as a helical segment; it reads SLLSIASISGCCQVTVPLGFF. The Cytoplasmic segment spans residues 425-593; sequence DKNPVSVSLI…SAERLRKLFQ (169 aa). 3 TPR repeats span residues 477–510, 511–544, and 545–578; these read AEIS…CGNN, ATYY…DKKN, and VKAY…EPTN.

In terms of assembly, part of the Toc complex and of the intermembrane space complex. Interacts with TOC12, TIC22 and with the cytosolic domain of TOC34 in a GTP dependent manner. Interacts (via TPR region) with HSP90 and with HSP70 with low efficiency.

It is found in the plastid. Its subcellular location is the chloroplast outer membrane. In terms of biological role, chaperone receptor mediating Hsp90-dependent protein targeting to chloroplasts. Bi-functional preprotein receptor acting on both sides of the membrane. This Pisum sativum (Garden pea) protein is Translocon at the outer membrane of chloroplasts 64 (TOC64).